Consider the following 179-residue polypeptide: Translation initiation factor IF-3 (179 aa).

The protein belongs to the IF-3 family. As to quaternary structure, monomer.

It localises to the cytoplasm. Its function is as follows. IF-3 binds to the 30S ribosomal subunit and shifts the equilibrium between 70S ribosomes and their 50S and 30S subunits in favor of the free subunits, thus enhancing the availability of 30S subunits on which protein synthesis initiation begins. This is Translation initiation factor IF-3 from Leptospira borgpetersenii serovar Hardjo-bovis (strain L550).